The chain runs to 240 residues: uncharacterized protein (240 aa).

Residues 1–27 (MKDLQKKSSVRRQITNEDDERYGEDSI) are disordered. 2 positions are modified to phosphoserine: serine 59 and serine 95. Residues 189–227 (RTPSPTGKSVGDEATSNNMHSSSAIRNPNGPTVDPEEGK) form a disordered region. The span at 202–218 (ATSNNMHSSSAIRNPNG) shows a compositional bias: polar residues.

This is an uncharacterized protein from Saccharomyces cerevisiae (strain ATCC 204508 / S288c) (Baker's yeast).